Reading from the N-terminus, the 124-residue chain is Late embryogenesis abundant protein 37 (124 aa).

Residues 1-35 constitute a mitochondrion transit peptide; it reads MSQSLFNLKSLSRSINNTIRMRRYIVITKASQRAY.

This sequence belongs to the LEA type 3 family.

The protein resides in the mitochondrion. The chain is Late embryogenesis abundant protein 37 from Arabidopsis thaliana (Mouse-ear cress).